A 115-amino-acid chain; its full sequence is MSPIFTCITILCLLAAGSPGEEVAQTPKHLVRGEGQKAKLYCAPIKGHSYVFWYQQVLKNEFKFLISFQNENVFDETGMPKERFSAKCLPNSPCSLEIQATKLEDSAVYFCASSQ.

Residues Met-1 to Gly-20 form the signal peptide. Positions Glu-21 to Gln-115 constitute an Ig-like domain. Cys-42 and Cys-111 form a disulfide bridge.

In terms of assembly, alpha-beta TR is a heterodimer composed of an alpha and beta chain; disulfide-linked. The alpha-beta TR is associated with the transmembrane signaling CD3 coreceptor proteins to form the TR-CD3 (TcR or TCR). The assembly of alpha-beta TR heterodimers with CD3 occurs in the endoplasmic reticulum where a single alpha-beta TR heterodimer associates with one CD3D-CD3E heterodimer, one CD3G-CD3E heterodimer and one CD247 homodimer forming a stable octameric structure. CD3D-CD3E and CD3G-CD3E heterodimers preferentially associate with TR alpha and TR beta chains, respectively. The association of the CD247 homodimer is the last step of TcR assembly in the endoplasmic reticulum and is required for transport to the cell surface.

The protein localises to the cell membrane. Its function is as follows. V region of the variable domain of T cell receptor (TR) beta chain that participates in the antigen recognition. Alpha-beta T cell receptors are antigen specific receptors which are essential to the immune response and are present on the cell surface of T lymphocytes. Recognize peptide-major histocompatibility (MH) (pMH) complexes that are displayed by antigen presenting cells (APC), a prerequisite for efficient T cell adaptive immunity against pathogens. Binding of alpha-beta TR to pMH complex initiates TR-CD3 clustering on the cell surface and intracellular activation of LCK that phosphorylates the ITAM motifs of CD3G, CD3D, CD3E and CD247 enabling the recruitment of ZAP70. In turn ZAP70 phosphorylates LAT, which recruits numerous signaling molecules to form the LAT signalosome. The LAT signalosome propagates signal branching to three major signaling pathways, the calcium, the mitogen-activated protein kinase (MAPK) kinase and the nuclear factor NF-kappa-B (NF-kB) pathways, leading to the mobilization of transcription factors that are critical for gene expression and essential for T cell growth and differentiation. The T cell repertoire is generated in the thymus, by V-(D)-J rearrangement. This repertoire is then shaped by intrathymic selection events to generate a peripheral T cell pool of self-MH restricted, non-autoaggressive T cells. Post-thymic interaction of alpha-beta TR with the pMH complexes shapes TR structural and functional avidity. The sequence is that of T cell receptor beta variable 16 from Homo sapiens (Human).